Consider the following 417-residue polypeptide: Riboflavin biosynthesis protein RibBA (417 aa).

Positions 1–204 (MTRLDSIERA…IADLIEWRRK (204 aa)) are DHBP synthase. Residues 28 to 29 (RE), aspartate 33, 141 to 145 (RPGHT), and glutamate 165 contribute to the D-ribulose 5-phosphate site. Glutamate 29 contacts Mg(2+). Residue histidine 144 participates in Mg(2+) binding. The GTP cyclohydrolase II stretch occupies residues 205–417 (HEKHVQRIAE…LDDHPEADGA (213 aa)). Residue 259–263 (RVHSE) coordinates GTP. Residues cysteine 264, cysteine 275, and cysteine 277 each coordinate Zn(2+). GTP is bound by residues glutamine 280, 303-305 (EGR), and threonine 325. The active-site Proton acceptor; for GTP cyclohydrolase activity is the aspartate 337. Arginine 339 (nucleophile; for GTP cyclohydrolase activity) is an active-site residue. Residues threonine 360 and lysine 365 each coordinate GTP.

This sequence in the N-terminal section; belongs to the DHBP synthase family. The protein in the C-terminal section; belongs to the GTP cyclohydrolase II family. It depends on Mg(2+) as a cofactor. The cofactor is Mn(2+). Zn(2+) is required as a cofactor.

It carries out the reaction D-ribulose 5-phosphate = (2S)-2-hydroxy-3-oxobutyl phosphate + formate + H(+). The enzyme catalyses GTP + 4 H2O = 2,5-diamino-6-hydroxy-4-(5-phosphoribosylamino)-pyrimidine + formate + 2 phosphate + 3 H(+). It participates in cofactor biosynthesis; riboflavin biosynthesis; 2-hydroxy-3-oxobutyl phosphate from D-ribulose 5-phosphate: step 1/1. It functions in the pathway cofactor biosynthesis; riboflavin biosynthesis; 5-amino-6-(D-ribitylamino)uracil from GTP: step 1/4. Its function is as follows. Catalyzes the conversion of D-ribulose 5-phosphate to formate and 3,4-dihydroxy-2-butanone 4-phosphate. Catalyzes the conversion of GTP to 2,5-diamino-6-ribosylamino-4(3H)-pyrimidinone 5'-phosphate (DARP), formate and pyrophosphate. In Mycobacteroides abscessus (strain ATCC 19977 / DSM 44196 / CCUG 20993 / CIP 104536 / JCM 13569 / NCTC 13031 / TMC 1543 / L948) (Mycobacterium abscessus), this protein is Riboflavin biosynthesis protein RibBA.